Here is a 165-residue protein sequence, read N- to C-terminus: Plastocyanin, chloroplastic (165 aa).

A chloroplast-targeting transit peptide spans 1–66 (MATVTSSAAV…AGILAGNAMA (66 aa)). Residues 67–165 (AEVLLGSSDG…AGMVGKVTVN (99 aa)) form the Plastocyanin-like domain. 4 residues coordinate Cu cation: histidine 103, cysteine 150, histidine 153, and methionine 158.

The protein belongs to the plastocyanin family. It depends on Cu(2+) as a cofactor.

Its subcellular location is the plastid. It is found in the chloroplast thylakoid membrane. In terms of biological role, participates in electron transfer between P700 and the cytochrome b6-f complex in photosystem I. The protein is Plastocyanin, chloroplastic (PETE) of Silene latifolia subsp. alba (White campion).